The primary structure comprises 786 residues: Endonuclease MutS2 (786 aa).

335–342 (GPNTGGKT) is an ATP binding site. One can recognise a Smr domain in the interval 711-786 (LDLRGERFEN…GLGVTVVELK (76 aa)).

Belongs to the DNA mismatch repair MutS family. MutS2 subfamily. As to quaternary structure, homodimer. Binds to stalled ribosomes, contacting rRNA.

Its function is as follows. Endonuclease that is involved in the suppression of homologous recombination and thus may have a key role in the control of bacterial genetic diversity. Functionally, acts as a ribosome collision sensor, splitting the ribosome into its 2 subunits. Detects stalled/collided 70S ribosomes which it binds and splits by an ATP-hydrolysis driven conformational change. Acts upstream of the ribosome quality control system (RQC), a ribosome-associated complex that mediates the extraction of incompletely synthesized nascent chains from stalled ribosomes and their subsequent degradation. Probably generates substrates for RQC. The sequence is that of Endonuclease MutS2 from Bacillus cereus (strain Q1).